The primary structure comprises 299 residues: Protoheme IX farnesyltransferase (299 aa).

A run of 8 helical transmembrane segments spans residues 24 to 44, 46 to 66, 94 to 114, 118 to 138, 146 to 166, 172 to 192, 232 to 252, and 278 to 298; these read VVALMMLTAVVGMLLASDQGM, WNALILGNLGIALLASSAAAI, VHALTFAFSLAVVGMAILAWG, LTAWLTLASLIGYAVVYTLFL, IVLGGLAGAAPPLLGWTSVTG, ALLLVLIIFAWTPPHFWALAV, LPFITGMCGWIYFVAALALGV, and ITYLMLLFVALLADHYIPVTL.

This sequence belongs to the UbiA prenyltransferase family. Protoheme IX farnesyltransferase subfamily.

Its subcellular location is the cell inner membrane. It catalyses the reaction heme b + (2E,6E)-farnesyl diphosphate + H2O = Fe(II)-heme o + diphosphate. It participates in porphyrin-containing compound metabolism; heme O biosynthesis; heme O from protoheme: step 1/1. Converts heme B (protoheme IX) to heme O by substitution of the vinyl group on carbon 2 of heme B porphyrin ring with a hydroxyethyl farnesyl side group. This chain is Protoheme IX farnesyltransferase, found in Hahella chejuensis (strain KCTC 2396).